Here is a 1041-residue protein sequence, read N- to C-terminus: MENMFLQSSMLTCIFLLISGSCELCAEENFSRSYPCDEKKQNDSVIAECSNRRLQEVPQTVGKYVTELDLSDNFITHITNESFQGLQNLTKINLNHNPNVQHQNGNPGIQSNGLNITDGAFLNLKNLRELLLEDNQLPQIPSGLPESLTELSLIQNNIYNITKEGISRLINLKNLYLAWNCYFNKVCEKTNIEDGVFETLTNLELLSLSFNSLSHVPPKLPSSLRKLFLSNTQIKYISEEDFKGLINLTLLDLSGNCPRCFNAPFPCVPCDGGASINIDRFAFQNLTQLRYLNLSSTSLRKINAAWFKNMPHLKVLDLEFNYLVGEIASGAFLTMLPRLEILDLSFNYIKGSYPQHINISRNFSKLLSLRALHLRGYVFQELREDDFQPLMQLPNLSTINLGINFIKQIDFKLFQNFSNLEIIYLSENRISPLVKDTRQSYANSSSFQRHIRKRRSTDFEFDPHSNFYHFTRPLIKPQCAAYGKALDLSLNSIFFIGPNQFENLPDIACLNLSANSNAQVLSGTEFSAIPHVKYLDLTNNRLDFDNASALTELSDLEVLDLSYNSHYFRIAGVTHHLEFIQNFTNLKVLNLSHNNIYTLTDKYNLESKSLVELVFSGNRLDILWNDDDNRYISIFKGLKNLTRLDLSLNRLKHIPNEAFLNLPASLTELHINDNMLKFFNWTLLQQFPRLELLDLRGNKLLFLTDSLSDFTSSLRTLLLSHNRISHLPSGFLSEVSSLKHLDLSSNLLKTINKSALETKTTTKLSMLELHGNPFECTCDIGDFRRWMDEHLNVKIPRLVDVICASPGDQRGKSIVSLELTTCVSDVTAVILFFFTFFITTMVMLAALAHHLFYWDVWFIYNVCLAKVKGYRSLSTSQTFYDAYISYDTKDASVTDWVINELRYHLEESRDKNVLLCLEERDWDPGLAIIDNLMQSINQSKKTVFVLTKKYAKSWNFKTAFYLALQRLMDENMDVIIFILLEPVLQHSQYLRLRQRICKSSILQWPDNPKAEGLFWQTLRNVVLTENDSRYNNMYVDSIKQY.

An N-terminal signal peptide occupies residues 1 to 26; the sequence is MENMFLQSSMLTCIFLLISGSCELCA. At 27-827 the chain is on the extracellular side; the sequence is EENFSRSYPC…ELTTCVSDVT (801 aa). N-linked (GlcNAc...) asparagine glycosylation is found at Asn-29, Asn-42, Asn-80, Asn-88, and Asn-115. A disulfide bridge connects residues Cys-36 and Cys-49. LRR repeat units follow at residues 126–147, 148–168, 171–193, 202–223, 224–244, and 247–268; these read NLRE…LPES, LTEL…GISR, NLKN…TNIE, NLEL…LPSS, LRKL…DFKG, and NLTL…FPCV. An N-linked (GlcNAc...) asparagine glycan is attached at Asn-160. The cysteines at positions 181 and 187 are disulfide-linked. N-linked (GlcNAc...) asparagine glycosylation occurs at Asn-247. Cystine bridges form between Cys-257/Cys-270 and Cys-260/Cys-267. N-linked (GlcNAc...) asparagine glycans are attached at residues Asn-285 and Asn-293. LRR repeat units lie at residues 288-309, 312-334, and 338-360; these read QLRY…WFKN, HLKV…AFLT, and RLEI…INIS. N-linked (GlcNAc...) asparagine glycans are attached at residues Asn-358 and Asn-362. 3 LRR repeats span residues 368–389, 395–416, and 419–440; these read SLRA…DFQP, NLST…LFQN, and NLEI…TRQS. 2 N-linked (GlcNAc...) asparagine glycosylation sites follow: Asn-395 and Asn-416. Asn-443 is a glycosylation site (N-linked (GlcNAc...) asparagine). A disulfide bridge links Cys-479 with Cys-509. LRR repeat units lie at residues 482–503, 506–527, 531–551, and 555–577; these read YGKA…QFEN, DIAC…TEFS, HVKY…SALT, and DLEV…THHL. 2 N-linked (GlcNAc...) asparagine glycosylation sites follow: Asn-511 and Asn-546. 2 N-linked (GlcNAc...) asparagine glycosylation sites follow: Asn-582 and Asn-590. LRR repeat units follow at residues 585-606, 609-630, 640-661, 665-685, 689-710, 713-734, and 737-758; these read NLKV…YNLE, SLVE…DDNR, NLTR…AFLN, SLTE…TLLQ, RLEL…LSDF, SLRT…FLSE, and SLKH…ALET. Asn-640 and Asn-680 each carry an N-linked (GlcNAc...) asparagine glycan. An N-linked (GlcNAc...) asparagine glycan is attached at Asn-752. Residues 772–824 form the LRRCT domain; sequence NPFECTCDIGDFRRWMDEHLNVKIPRLVDVICASPGDQRGKSIVSLELTTCVS. Cysteines 776 and 803 form a disulfide. The helical transmembrane segment at 828 to 848 threads the bilayer; that stretch reads AVILFFFTFFITTMVMLAALA. The Cytoplasmic portion of the chain corresponds to 849–1041; sequence HHLFYWDVWF…NMYVDSIKQY (193 aa). The TIR domain maps to 878–1022; the sequence is TFYDAYISYD…LFWQTLRNVV (145 aa).

The protein belongs to the Toll-like receptor family. Homodimer. Interacts with MYD88 via their respective TIR domains. Interacts with UNC93B1. Interacts with BTK. Interacts with SMPDL3B. In terms of processing, ubiquitinated by RNF216; leading to degradation by the proteasome. Post-translationally, proteolytic processing occurs in monocytes and monocyte-derived macrophages by both furin-like proprotein convertase and cathepsins. The cleavage is necessary for dimer formation and subsequent activation. Expressed in myeloid dendritic cells, monocytes, and monocyte-derived dendritic cells.

The protein localises to the endosome membrane. Its activity is regulated as follows. Activated by RNAs having enough uridines. In terms of biological role, endosomal receptor that plays a key role in innate and adaptive immunity. Controls host immune response against pathogens through recognition of RNA degradation products specific to microorganisms that are initially processed by RNASET2. Recognizes GU-rich single-stranded RNA (GU-rich RNA) derived from SARS-CoV-2, SARS-CoV-1 and HIV-1 viruses. Upon binding to agonists, undergoes dimerization that brings TIR domains from the two molecules into direct contact, leading to the recruitment of TIR-containing downstream adapter MYD88 through homotypic interaction. In turn, the Myddosome signaling complex is formed involving IRAK4, IRAK1, TRAF6, TRAF3 leading to activation of downstream transcription factors NF-kappa-B and IRF7 to induce pro-inflammatory cytokines and interferons, respectively. The chain is Toll-like receptor 8 from Homo sapiens (Human).